The chain runs to 227 residues: Phosphoribosylformylglycinamidine synthase subunit PurQ (227 aa).

The Glutamine amidotransferase type-1 domain maps to 2–227 (RWAIVRFPGA…FLGLVKEVAR (226 aa)). The active-site Nucleophile is the Cys85. Catalysis depends on residues His200 and Glu202.

As to quaternary structure, part of the FGAM synthase complex composed of 1 PurL, 1 PurQ and 2 PurS subunits.

It localises to the cytoplasm. The catalysed reaction is N(2)-formyl-N(1)-(5-phospho-beta-D-ribosyl)glycinamide + L-glutamine + ATP + H2O = 2-formamido-N(1)-(5-O-phospho-beta-D-ribosyl)acetamidine + L-glutamate + ADP + phosphate + H(+). It carries out the reaction L-glutamine + H2O = L-glutamate + NH4(+). It functions in the pathway purine metabolism; IMP biosynthesis via de novo pathway; 5-amino-1-(5-phospho-D-ribosyl)imidazole from N(2)-formyl-N(1)-(5-phospho-D-ribosyl)glycinamide: step 1/2. Its function is as follows. Part of the phosphoribosylformylglycinamidine synthase complex involved in the purines biosynthetic pathway. Catalyzes the ATP-dependent conversion of formylglycinamide ribonucleotide (FGAR) and glutamine to yield formylglycinamidine ribonucleotide (FGAM) and glutamate. The FGAM synthase complex is composed of three subunits. PurQ produces an ammonia molecule by converting glutamine to glutamate. PurL transfers the ammonia molecule to FGAR to form FGAM in an ATP-dependent manner. PurS interacts with PurQ and PurL and is thought to assist in the transfer of the ammonia molecule from PurQ to PurL. This is Phosphoribosylformylglycinamidine synthase subunit PurQ from Thermus thermophilus (strain ATCC 27634 / DSM 579 / HB8).